The primary structure comprises 221 residues: MTETAATETTPAAPPAEPKQKKKQQPKKAAGGAKAKKPSGPSASELIVKSVSASKERGGVSLAALKKALAAGGYNVERNNSRLKLALKALVTKGTLTQVKGSGASGSFKLNKKQLETKVKAVAKKKLVAPKAKKPVAAKKKPKSPKKPKKVSAAAAKSPKKAKKPVKAAKSPKKPKAVKPKKVTKSPAKKATKPKAAKAKIAKPKIAKAKAAKGKKAAAKK.

Composition is skewed to low complexity over residues 1–11 (MTETAATETTP) and 27–44 (KKAA…PSAS). 2 disordered regions span residues 1–44 (MTET…PSAS) and 123–221 (AKKK…AAKK). Positions 39–112 (SGPSASELIV…GASGSFKLNK (74 aa)) constitute an H15 domain. Basic residues-rich tracts occupy residues 123-150 (AKKK…KPKK) and 158-221 (SPKK…AAKK).

This sequence belongs to the histone H1/H5 family.

It localises to the nucleus. The protein resides in the chromosome. Its function is as follows. Histones H1 are necessary for the condensation of nucleosome chains into higher-order structures. The sequence is that of Histone H1C from Xenopus laevis (African clawed frog).